A 315-amino-acid chain; its full sequence is MTRLPILLLLISLVYATPFPQTSKKIGDDATLSCNRNNTNDYVVMSAWYKEPNSIILLAAKSDVLYFDNYTKDKISYDSPYDDLVTTITIKSLTARDAGTYVCAFFMTSPTNDTDKVDYEEYSTELIVNTDSESTIDIILSGSTHSPETSSEKPDYIDNSNCSSVFEIATPEPITDNVEDHTDTVTYTSDSINTVSATSGESTTDETPEPITDKEEDHTVTDTVSYTTVSTSSGIVTTKSTTDDADLYDTYNDNDTVPSTTVGSSTTSISNYKTKDFVEIFGITALIILSAVAIFCITYYICNKRSRKYKTENKV.

Positions 1 to 16 (MTRLPILLLLISLVYA) are cleaved as a signal peptide. Positions 17–121 (TPFPQTSKKI…NDTDKVDYEE (105 aa)) constitute an Ig-like V-type domain. Over 17–279 (TPFPQTSKKI…SNYKTKDFVE (263 aa)) the chain is Virion surface. Cys34 and Cys103 are joined by a disulfide. 4 N-linked (GlcNAc...) asparagine; by host glycosylation sites follow: Asn37, Asn69, Asn112, and Asn161. The interval 194–213 (TVSATSGESTTDETPEPITD) is disordered. N-linked (GlcNAc...) asparagine; by host glycosylation is present at Asn254. A helical transmembrane segment spans residues 280 to 303 (IFGITALIILSAVAIFCITYYICN). Residues 304–315 (KRSRKYKTENKV) lie on the Intravirion side of the membrane.

This sequence belongs to the orthopoxvirus OPG185 family. As to quaternary structure, heterodimerizes with OPG040. The heterodimer OPG185-OPG040 interacts with components of the entry fusion complex OPG143 and OPG094. Heterodimer with C3/VPC protein; disulfide-linked. In terms of processing, glycosylated; contains phosphate and sulfate-substituted glycans. O-glycosylation is required for hemagglutination and hemadsorption activities of infected cell membranes.

It localises to the virion membrane. The protein localises to the host membrane. Prevents cell to cell fusion by interacting with and directing the viral OPG040 protein on the host plasma membrane. The OPG185-OPG040 complex associates with components of the entry fusion complex (EFC) presumably to avoid superinfection and syncytium formation. Via its interaction with C3/VCP protein, protects the infected cell and probably also the extracellular enveloped virus from complement attack. The polypeptide is Protein OPG185 (OPG185) (Vaccinia virus (strain Copenhagen) (VACV)).